The sequence spans 672 residues: Threonine--tRNA ligase (672 aa).

In terms of domain architecture, TGS spans 1–64 (MTELLKISLP…EGDAELALIT (64 aa)). The catalytic stretch occupies residues 257-566 (DHRKLGREMD…LIEHFAGRLP (310 aa)). 3 residues coordinate Zn(2+): cysteine 362, histidine 413, and histidine 543.

Belongs to the class-II aminoacyl-tRNA synthetase family. As to quaternary structure, homodimer. Requires Zn(2+) as cofactor.

The protein resides in the cytoplasm. The catalysed reaction is tRNA(Thr) + L-threonine + ATP = L-threonyl-tRNA(Thr) + AMP + diphosphate + H(+). Catalyzes the attachment of threonine to tRNA(Thr) in a two-step reaction: L-threonine is first activated by ATP to form Thr-AMP and then transferred to the acceptor end of tRNA(Thr). Also edits incorrectly charged L-seryl-tRNA(Thr). The protein is Threonine--tRNA ligase of Erythrobacter litoralis (strain HTCC2594).